The primary structure comprises 148 residues: Holo-[acyl-carrier-protein] synthase (148 aa).

Mg(2+)-binding residues include Asp9 and Glu63.

This sequence belongs to the P-Pant transferase superfamily. AcpS family. It depends on Mg(2+) as a cofactor.

The protein localises to the cytoplasm. It catalyses the reaction apo-[ACP] + CoA = holo-[ACP] + adenosine 3',5'-bisphosphate + H(+). Its function is as follows. Transfers the 4'-phosphopantetheine moiety from coenzyme A to a Ser of acyl-carrier-protein. This Burkholderia cenocepacia (strain HI2424) protein is Holo-[acyl-carrier-protein] synthase.